A 156-amino-acid polypeptide reads, in one-letter code: Small ribosomal subunit protein uS7 (156 aa).

This sequence belongs to the universal ribosomal protein uS7 family. In terms of assembly, part of the 30S ribosomal subunit. Contacts proteins S9 and S11.

Its function is as follows. One of the primary rRNA binding proteins, it binds directly to 16S rRNA where it nucleates assembly of the head domain of the 30S subunit. Is located at the subunit interface close to the decoding center, probably blocks exit of the E-site tRNA. This chain is Small ribosomal subunit protein uS7, found in Streptococcus pyogenes serotype M1.